A 492-amino-acid polypeptide reads, in one-letter code: Virion host shutoff protein (492 aa).

Disordered stretches follow at residues 110-130 (EEAS…SRPS), 288-307 (SQAR…LESM), and 334-371 (EDDY…ELVQ).

It belongs to the herpesviridae VHS protein family. Interacts with human EIF4H, EIF4A1 and EIF4A2; interaction with eIF4AI and EIF4A2 presumably allows Vhs protein to associate with the eIF4F cap-binding complex.

It localises to the virion. In terms of biological role, minor structural protein that acts as an endoribonuclease during lytic infection. Degrades host mRNAs in the cytoplasm by cutting them at preferred sites, including some in regions of translation initiation. Together with inhibition of host splicing by ICP27, contributes to an overall decrease in host protein synthesis. Also, after the onset of viral transcription, accelerates the turnover of viral mRNA, thereby facilitating the sequential expression of different classes of viral genes. Binds translation initiation factors eIF4H, eIF4AI, and eIF4AII, thereby may interact directly with the translation initiation complex and thus digest specifically mRNAs. Also impedes antigen presentation by major histocompatibility complex class I and class II molecules, inhibits secretion of cytokines that would otherwise recruit lymphocytes and neutrophils cells to the site of infection and blocks the activation of dendritic cells. Impedes the alpha/beta interferon-mediated response to infection. Inhibits the integrated stress response (ISR) in the infected cell, this function requires the endonuclease activity. Stress granule formation is thus inhibited, which allows protein synthesis and viral replication. This chain is Virion host shutoff protein (UL41), found in Homo sapiens (Human).